Reading from the N-terminus, the 181-residue chain is Trafficking protein particle complex subunit 3 homolog (181 aa).

Residue Cys-70 is the site of S-palmitoyl cysteine attachment.

The protein belongs to the TRAPP small subunits family. BET3 subfamily. Homodimer. Part of the multisubunit TRAPP (transport protein particle) complex.

It is found in the golgi apparatus. The protein resides in the cis-Golgi network. The protein localises to the endoplasmic reticulum. May play a role in vesicular transport from endoplasmic reticulum to Golgi. Required for the systemic spread of the RNAi response. The polypeptide is Trafficking protein particle complex subunit 3 homolog (trpp-3) (Caenorhabditis elegans).